Consider the following 434-residue polypeptide: Flagellum-specific ATP synthase (434 aa).

164–171 (AGSGVGKS) serves as a coordination point for ATP.

This sequence belongs to the ATPase alpha/beta chains family.

Its subcellular location is the cytoplasm. The catalysed reaction is ATP + H2O + 4 H(+)(in) = ADP + phosphate + 5 H(+)(out). Functionally, probable catalytic subunit of a protein translocase for flagellum-specific export, or a proton translocase involved in local circuits at the flagellum. The sequence is that of Flagellum-specific ATP synthase (fliI) from Helicobacter pylori (strain ATCC 700392 / 26695) (Campylobacter pylori).